Consider the following 618-residue polypeptide: Dihydroxy-acid dehydratase (618 aa).

Asp81 serves as a coordination point for Mg(2+). Cys122 is a [2Fe-2S] cluster binding site. Mg(2+) contacts are provided by Asp123 and Lys124. Lys124 is subject to N6-carboxylysine. Residue Cys195 participates in [2Fe-2S] cluster binding. Position 491 (Glu491) interacts with Mg(2+). Ser517 (proton acceptor) is an active-site residue.

This sequence belongs to the IlvD/Edd family. In terms of assembly, homodimer. [2Fe-2S] cluster is required as a cofactor. Mg(2+) serves as cofactor.

It carries out the reaction (2R)-2,3-dihydroxy-3-methylbutanoate = 3-methyl-2-oxobutanoate + H2O. The enzyme catalyses (2R,3R)-2,3-dihydroxy-3-methylpentanoate = (S)-3-methyl-2-oxopentanoate + H2O. It functions in the pathway amino-acid biosynthesis; L-isoleucine biosynthesis; L-isoleucine from 2-oxobutanoate: step 3/4. It participates in amino-acid biosynthesis; L-valine biosynthesis; L-valine from pyruvate: step 3/4. Functions in the biosynthesis of branched-chain amino acids. Catalyzes the dehydration of (2R,3R)-2,3-dihydroxy-3-methylpentanoate (2,3-dihydroxy-3-methylvalerate) into 2-oxo-3-methylpentanoate (2-oxo-3-methylvalerate) and of (2R)-2,3-dihydroxy-3-methylbutanoate (2,3-dihydroxyisovalerate) into 2-oxo-3-methylbutanoate (2-oxoisovalerate), the penultimate precursor to L-isoleucine and L-valine, respectively. The polypeptide is Dihydroxy-acid dehydratase (Rhodopseudomonas palustris (strain ATCC BAA-98 / CGA009)).